The following is a 183-amino-acid chain: Adenine phosphoribosyltransferase (183 aa).

The protein belongs to the purine/pyrimidine phosphoribosyltransferase family. Homodimer.

Its subcellular location is the cytoplasm. The catalysed reaction is AMP + diphosphate = 5-phospho-alpha-D-ribose 1-diphosphate + adenine. The protein operates within purine metabolism; AMP biosynthesis via salvage pathway; AMP from adenine: step 1/1. Catalyzes a salvage reaction resulting in the formation of AMP, that is energically less costly than de novo synthesis. The protein is Adenine phosphoribosyltransferase of Salmonella arizonae (strain ATCC BAA-731 / CDC346-86 / RSK2980).